The chain runs to 390 residues: Succinate--CoA ligase [ADP-forming] subunit beta (390 aa).

Residues 9 to 244 enclose the ATP-grasp domain; that stretch reads KEILKRYGVN…ETQTDTSENE (236 aa). ATP is bound by residues lysine 46, 53 to 55, glutamate 99, leucine 102, and glutamate 107; that span reads GRG. The Mg(2+) site is built by asparagine 199 and aspartate 213. Substrate-binding positions include asparagine 264 and 321-323; that span reads GIV.

The protein belongs to the succinate/malate CoA ligase beta subunit family. Heterotetramer of two alpha and two beta subunits. Mg(2+) serves as cofactor.

The enzyme catalyses succinate + ATP + CoA = succinyl-CoA + ADP + phosphate. It catalyses the reaction GTP + succinate + CoA = succinyl-CoA + GDP + phosphate. It functions in the pathway carbohydrate metabolism; tricarboxylic acid cycle; succinate from succinyl-CoA (ligase route): step 1/1. Its function is as follows. Succinyl-CoA synthetase functions in the citric acid cycle (TCA), coupling the hydrolysis of succinyl-CoA to the synthesis of either ATP or GTP and thus represents the only step of substrate-level phosphorylation in the TCA. The beta subunit provides nucleotide specificity of the enzyme and binds the substrate succinate, while the binding sites for coenzyme A and phosphate are found in the alpha subunit. This Campylobacter curvus (strain 525.92) protein is Succinate--CoA ligase [ADP-forming] subunit beta.